Consider the following 460-residue polypeptide: 25S rRNA (cytosine-C(5))-methyltransferase rcm1 (460 aa).

S-adenosyl-L-methionine-binding positions include 223–229 (CAAPGNK), glutamate 246, aspartate 273, and aspartate 293. Residue cysteine 350 is the Nucleophile of the active site. The segment covering 430–439 (KMYKNDDDTK) has biased composition (basic and acidic residues). Residues 430 to 460 (KMYKNDDDTKKRKRKKKKKEVKKKARIQGEE) form a disordered region. Residues 440-460 (KRKRKKKKKEVKKKARIQGEE) are compositionally biased toward basic residues.

This sequence belongs to the class I-like SAM-binding methyltransferase superfamily. RsmB/NOP family. Interacts with trm112.

Its subcellular location is the nucleus. The protein resides in the nucleolus. The enzyme catalyses a cytidine in 25S rRNA + S-adenosyl-L-methionine = a 5-methylcytidine in 25S rRNA + S-adenosyl-L-homocysteine + H(+). S-adenosyl-L-methionine-dependent methyltransferase that specifically methylates the C(5) position of a cytosine in 25S rRNA. The polypeptide is 25S rRNA (cytosine-C(5))-methyltransferase rcm1 (rcm1) (Schizosaccharomyces pombe (strain 972 / ATCC 24843) (Fission yeast)).